A 59-amino-acid chain; its full sequence is Large ribosomal subunit protein bL32 (59 aa).

A compositionally biased stretch (basic residues) spans 1–19 (MAQPKKKTSKSRRNMRRSH). The segment at 1-20 (MAQPKKKTSKSRRNMRRSHD) is disordered.

Belongs to the bacterial ribosomal protein bL32 family.

In Maridesulfovibrio salexigens (strain ATCC 14822 / DSM 2638 / NCIMB 8403 / VKM B-1763) (Desulfovibrio salexigens), this protein is Large ribosomal subunit protein bL32.